The primary structure comprises 116 residues: NADH-ubiquinone oxidoreductase chain 3 (116 aa).

The next 3 helical transmembrane spans lie at F6–A26, F56–L76, and P85–Y105.

Belongs to the complex I subunit 3 family.

Its subcellular location is the mitochondrion membrane. It catalyses the reaction a ubiquinone + NADH + 5 H(+)(in) = a ubiquinol + NAD(+) + 4 H(+)(out). Core subunit of the mitochondrial membrane respiratory chain NADH dehydrogenase (Complex I) that is believed to belong to the minimal assembly required for catalysis. Complex I functions in the transfer of electrons from NADH to the respiratory chain. The immediate electron acceptor for the enzyme is believed to be ubiquinone. The protein is NADH-ubiquinone oxidoreductase chain 3 (MT-ND3) of Struthio camelus (Common ostrich).